A 488-amino-acid chain; its full sequence is MKNEEEEPLSPMARVFQSPDIDLCAIINIGFKTKINPDVVLDALKQNVYKHPRFSSKLSENGEKWIETEVNVEDHVIVPYIDPEDICEGGQSFVDDYISRLTLIPLDRSRPLWDIHILNVKTSYAEAVGVIRFNHALADGMSFISLVLACTHKTSNPDMLSTAIPSVKRRSTVSHSLKKTGWFLTAIFTIGSTMRLIWNTLVDMFLLFATMLFLKDTKTPLKGGANVRSNPKTFYHRNISLDDIKLIKNAMNMTINDVLLGITQAALSSYLNRRYEHENNNEEDGVLTSYTNNLPDRIRFRAGCTVNLRSDIGFKPLAEMMVKDSKCRWGNYFSFIILPLSISLETDPLVYLNKSKAMMARTKHSYQAALTYFLIKISLKVLGAKATTSLFNQHLMNITTCVSNVMGPMEEISFNGHPVAYISPSSYGHSHALLIHYTSYAGEMTITITVDPTVIPDPHKICDDMEESLKTMKAVLWERGLLKEAYKV.

Topologically, residues 1–195 are cytoplasmic; that stretch reads MKNEEEEPLS…AIFTIGSTMR (195 aa). The active-site Proton acceptor is the histidine 135. Residues 196-214 form a helical membrane-spanning segment; sequence LIWNTLVDMFLLFATMLFL. Residues 215-488 lie on the Lumenal side of the membrane; that stretch reads KDTKTPLKGG…RGLLKEAYKV (274 aa). N-linked (GlcNAc...) asparagine glycosylation is found at asparagine 238, asparagine 252, asparagine 353, and asparagine 397.

It in the N-terminal section; belongs to the long-chain O-acyltransferase family. In terms of tissue distribution, mostly expressed in flowers and siliques and at low levels in stems.

The protein resides in the cell membrane. Its subcellular location is the endoplasmic reticulum membrane. The enzyme catalyses an acyl-CoA + a 1,2-diacyl-sn-glycerol = a triacyl-sn-glycerol + CoA. The catalysed reaction is a long chain fatty alcohol + a fatty acyl-CoA = a wax ester + CoA. Its pathway is glycerolipid metabolism; triacylglycerol biosynthesis. It functions in the pathway lipid metabolism. Bifunctional wax ester synthase/diacylglycerol acyltransferase. Involved in cuticular wax biosynthesis. In Arabidopsis thaliana (Mouse-ear cress), this protein is Wax ester synthase/diacylglycerol acyltransferase 8.